We begin with the raw amino-acid sequence, 517 residues long: Bifunctional purine biosynthesis protein PurH (517 aa).

Residues 1-145 (MSPLALVSVS…KNHADVAVLV (145 aa)) enclose the MGS-like domain.

It belongs to the PurH family.

The enzyme catalyses (6R)-10-formyltetrahydrofolate + 5-amino-1-(5-phospho-beta-D-ribosyl)imidazole-4-carboxamide = 5-formamido-1-(5-phospho-D-ribosyl)imidazole-4-carboxamide + (6S)-5,6,7,8-tetrahydrofolate. It carries out the reaction IMP + H2O = 5-formamido-1-(5-phospho-D-ribosyl)imidazole-4-carboxamide. It participates in purine metabolism; IMP biosynthesis via de novo pathway; 5-formamido-1-(5-phospho-D-ribosyl)imidazole-4-carboxamide from 5-amino-1-(5-phospho-D-ribosyl)imidazole-4-carboxamide (10-formyl THF route): step 1/1. Its pathway is purine metabolism; IMP biosynthesis via de novo pathway; IMP from 5-formamido-1-(5-phospho-D-ribosyl)imidazole-4-carboxamide: step 1/1. The chain is Bifunctional purine biosynthesis protein PurH from Prochlorococcus marinus (strain MIT 9515).